Consider the following 232-residue polypeptide: E3 ubiquitin-protein ligase RNF125 (232 aa).

Positions 1–10 (MGSVLSSDSG) are enriched in polar residues. The tract at residues 1-27 (MGSVLSSDSGKSAPPSATPRALERRGD) is disordered. Gly-2 is lipidated: N-myristoyl glycine. Cys-37 and Cys-40 together coordinate Zn(2+). Residues 37–76 (CAVCLEVLHQPVRTRCGHVFCRSCIATSLKNNKWTCPYCR) form an RING-type zinc finger. The interaction with the C2HC RNF-type zinc finger stretch occupies residues 43-45 (VLH). Zn(2+)-binding residues include Cys-52, His-54, Cys-57, Cys-60, Cys-72, Cys-75, Cys-100, and Cys-103. The C2HC RNF-type zinc finger occupies 100 to 119 (CAECDTLVCLGEMRAHIRTC). Positions 109-113 (LGEMR) are interaction with the RING-type zinc finger. The Zn(2+) site is built by His-115 and Cys-119. Residues 120 to 128 (QKYIDKYGP) form a linker region region. Residues 210–224 (EEALIRRVLDRSLLE) form a required for interaction with ubiquitin and for autoubiquitination region.

As to quaternary structure, interacts with UBE2D1. Interacts with VCP/p97; leading to recruit RNF125 to RIGI and promote ubiquitination of RIGI. Autoubiquitinated, leading to its subsequent proteasomal degradation.

It is found in the golgi apparatus membrane. The enzyme catalyses S-ubiquitinyl-[E2 ubiquitin-conjugating enzyme]-L-cysteine + [acceptor protein]-L-lysine = [E2 ubiquitin-conjugating enzyme]-L-cysteine + N(6)-ubiquitinyl-[acceptor protein]-L-lysine.. Its pathway is protein modification; protein ubiquitination. E3 ubiquitin-protein ligase that mediates ubiquitination and subsequent proteasomal degradation of target proteins, such as RIGI, MAVS/IPS1, IFIH1/MDA5, JAK1 and p53/TP53. Acts as a negative regulator of type I interferon production by mediating ubiquitination of RIGI at 'Lys-181', leading to RIGI degradation. Mediates ubiquitination and subsequent degradation of p53/TP53. Mediates ubiquitination and subsequent degradation of JAK1. Acts as a positive regulator of T-cell activation. The protein is E3 ubiquitin-protein ligase RNF125 (RNF125) of Macaca fascicularis (Crab-eating macaque).